The sequence spans 197 residues: Holliday junction branch migration complex subunit RuvA (197 aa).

Residues 1–63 (MFEYLNGKLV…EDAHSLYGFV (63 aa)) are domain I. The segment at 64–142 (NEAEKALFLR…ATGTVGISLL (79 aa)) is domain II. Positions 142-146 (LDAGP) are flexible linker. A domain III region spans residues 147 to 197 (AGNLALEEAIEALQALGYKATELKKIEKKLAQETGLTSEEYIKSALKLMMK).

It belongs to the RuvA family. Homotetramer. Forms an RuvA(8)-RuvB(12)-Holliday junction (HJ) complex. HJ DNA is sandwiched between 2 RuvA tetramers; dsDNA enters through RuvA and exits via RuvB. An RuvB hexamer assembles on each DNA strand where it exits the tetramer. Each RuvB hexamer is contacted by two RuvA subunits (via domain III) on 2 adjacent RuvB subunits; this complex drives branch migration. In the full resolvosome a probable DNA-RuvA(4)-RuvB(12)-RuvC(2) complex forms which resolves the HJ.

The protein resides in the cytoplasm. Its function is as follows. The RuvA-RuvB-RuvC complex processes Holliday junction (HJ) DNA during genetic recombination and DNA repair, while the RuvA-RuvB complex plays an important role in the rescue of blocked DNA replication forks via replication fork reversal (RFR). RuvA specifically binds to HJ cruciform DNA, conferring on it an open structure. The RuvB hexamer acts as an ATP-dependent pump, pulling dsDNA into and through the RuvAB complex. HJ branch migration allows RuvC to scan DNA until it finds its consensus sequence, where it cleaves and resolves the cruciform DNA. The sequence is that of Holliday junction branch migration complex subunit RuvA from Lactococcus lactis subsp. lactis (strain IL1403) (Streptococcus lactis).